The chain runs to 248 residues: Phosphoadenosine 5'-phosphosulfate reductase (248 aa).

Catalysis depends on Cys-239, which acts as the Nucleophile; cysteine thiosulfonate intermediate.

It belongs to the PAPS reductase family. CysH subfamily.

It is found in the cytoplasm. The catalysed reaction is [thioredoxin]-disulfide + sulfite + adenosine 3',5'-bisphosphate + 2 H(+) = [thioredoxin]-dithiol + 3'-phosphoadenylyl sulfate. It functions in the pathway sulfur metabolism; hydrogen sulfide biosynthesis; sulfite from sulfate: step 3/3. Functionally, catalyzes the formation of sulfite from phosphoadenosine 5'-phosphosulfate (PAPS) using thioredoxin as an electron donor. The chain is Phosphoadenosine 5'-phosphosulfate reductase from Alteromonas mediterranea (strain DSM 17117 / CIP 110805 / LMG 28347 / Deep ecotype).